The following is a 183-amino-acid chain: Archaemetzincin (183 aa).

H131 provides a ligand contact to Zn(2+). The active-site Proton acceptor is the E132. 6 residues coordinate Zn(2+): H135, H141, C142, C147, C166, and C169.

The protein belongs to the peptidase M54 family. Monomer. Requires Zn(2+) as cofactor.

Functionally, probable zinc metalloprotease whose natural substrate is unknown. The sequence is that of Archaemetzincin from Saccharolobus islandicus (strain L.S.2.15 / Lassen #1) (Sulfolobus islandicus).